Here is a 154-residue protein sequence, read N- to C-terminus: Yop proteins translocation protein O (154 aa).

A disordered region spans residues 132-154; that stretch reads ELNQQHYQEEQEQEEFLQHHRNA.

It belongs to the SpaM family.

In terms of biological role, component of the yop secretion machinery. This chain is Yop proteins translocation protein O (yscO), found in Yersinia pseudotuberculosis serotype I (strain IP32953).